The following is a 79-amino-acid chain: UPF0180 protein BCAH820_1484 (79 aa).

It belongs to the UPF0180 family.

This chain is UPF0180 protein BCAH820_1484, found in Bacillus cereus (strain AH820).